Here is a 255-residue protein sequence, read N- to C-terminus: Imidazole glycerol phosphate synthase subunit HisF (255 aa).

Active-site residues include Asp11 and Asp130.

Belongs to the HisA/HisF family. As to quaternary structure, heterodimer of HisH and HisF.

The protein localises to the cytoplasm. It catalyses the reaction 5-[(5-phospho-1-deoxy-D-ribulos-1-ylimino)methylamino]-1-(5-phospho-beta-D-ribosyl)imidazole-4-carboxamide + L-glutamine = D-erythro-1-(imidazol-4-yl)glycerol 3-phosphate + 5-amino-1-(5-phospho-beta-D-ribosyl)imidazole-4-carboxamide + L-glutamate + H(+). It functions in the pathway amino-acid biosynthesis; L-histidine biosynthesis; L-histidine from 5-phospho-alpha-D-ribose 1-diphosphate: step 5/9. Functionally, IGPS catalyzes the conversion of PRFAR and glutamine to IGP, AICAR and glutamate. The HisF subunit catalyzes the cyclization activity that produces IGP and AICAR from PRFAR using the ammonia provided by the HisH subunit. This Exiguobacterium sp. (strain ATCC BAA-1283 / AT1b) protein is Imidazole glycerol phosphate synthase subunit HisF.